A 601-amino-acid chain; its full sequence is Glutathione-regulated potassium-efflux system protein KefB (601 aa).

Helical transmembrane passes span 4-24, 29-49, 55-75, 87-107, 115-135, 152-172, 177-197, 207-227, 230-250, 268-288, 291-311, 324-344, and 356-376; these read SDFLLAGVLFLFAAVAAVPLA, IGAVLGYLLAGIAIGPWGLGF, EILHFSELGVVFLMFIIGLEL, IFGVGAAQVLLSAALLAGLLM, AAVVGGIGLAMSSTAMALQLM, VLLFQDLAVIPALALVPLLAG, HFDWMKIGIKVLAFVGMLIGG, FIAASGVREVFTAATLLLVLG, LFMDALGLSMALGTFIAGVLL, GLLLGLFFISVGMSLNLGVLY, LLWVVISVVVLVAVKILVLYL, MQFAGVLSQGGEFAFVLFSTA, and ALLLVTVTLSMMTTPLLMKLV. Residues 400–519 form the RCK N-terminal domain; it reads KPQVIVVGFG…AGVTQFSRET (120 aa).

This sequence belongs to the monovalent cation:proton antiporter 2 (CPA2) transporter (TC 2.A.37) family. KefB subfamily. As to quaternary structure, interacts with the regulatory subunit KefG.

Its subcellular location is the cell inner membrane. Functionally, pore-forming subunit of a potassium efflux system that confers protection against electrophiles. Catalyzes K(+)/H(+) antiport. This chain is Glutathione-regulated potassium-efflux system protein KefB, found in Escherichia coli (strain ATCC 8739 / DSM 1576 / NBRC 3972 / NCIMB 8545 / WDCM 00012 / Crooks).